A 347-amino-acid polypeptide reads, in one-letter code: tRNA(Ile)-lysidine synthase (347 aa).

Residue Ser-27–Ser-32 coordinates ATP. The disordered stretch occupies residues Ala-243–His-263.

This sequence belongs to the tRNA(Ile)-lysidine synthase family.

It is found in the cytoplasm. It carries out the reaction cytidine(34) in tRNA(Ile2) + L-lysine + ATP = lysidine(34) in tRNA(Ile2) + AMP + diphosphate + H(+). Functionally, ligates lysine onto the cytidine present at position 34 of the AUA codon-specific tRNA(Ile) that contains the anticodon CAU, in an ATP-dependent manner. Cytidine is converted to lysidine, thus changing the amino acid specificity of the tRNA from methionine to isoleucine. The protein is tRNA(Ile)-lysidine synthase of Nitratidesulfovibrio vulgaris (strain ATCC 29579 / DSM 644 / CCUG 34227 / NCIMB 8303 / VKM B-1760 / Hildenborough) (Desulfovibrio vulgaris).